The following is a 57-amino-acid chain: MSEELQPNQTPVQEDPKFGFNNYAEKLNGRAAMVGFLLILVIEYFTNQGVLAWLGLR.

Residues 25-30 (EKLNGR) carry the Chlorophyll-binding motif motif. A helical transmembrane segment spans residues 25-46 (EKLNGRAAMVGFLLILVIEYFT).

It belongs to the Hlip family. Probably forms dimers which bind 6 chlorophyll a and 2 beta-carotenoid molecules. Cofractionates in an approximately 50 kDa fraction of the thylakoid membrane with HliC. Does not associate with mature PSII. Purified in several chlorophyll- and carotenoid-containing complexes, including photosystem II (PSII) assembly intermediate complex RCII* (iD1, D1, D2, PsbE, PsbF, PsbI, Ycf39, Ycf48, HliC and HliD) and the Ycf39-Hlip complex (Ycf39, HliC, HliD and pigments).

Its subcellular location is the cellular thylakoid membrane. In terms of biological role, involved in photosystem II (PSII) assembly and/or repair under high light stress. Required for binding of chlorophyll and carotenoids by the Ycf39-Hlip complex. The Ycf39-Hlip complex binds D1 at an early stage of PSII assembly along with Ycf48, ribosomes and ChlG, the last enzyme in chlorophyll biosynthesis; it may be involved in chlorophyll reuse and delivery to D1 in the initial stages of PSII assembly. Binds chlorophyll a and beta-carotenoid in a 3:1 stoichiometry in the presence and absence of Yfc39; in the Ycf39-HliC-HliD complex, HliD binds all the pigment. The Ycf39-Hlip complex efficiently quenches chlorophyll fluorescence, contributing to photoprotection. Deletion of 4 to 5 members of the Hlip family suggests the proteins are involved in regulation of chlorophyll biosynthesis, in stabilization of chlorophyll-binding proteins and/or in reuse of chlorophylls, and may regulate tetrapyrrole biosynthesis. Might bind chlorophyll and/or carotenoids in association with HliC (called the ScpBE pair). The Hlips might regulate tetrapyrrole biosynthesis, maybe at the level of aminolevulinic acid synthesis and probably stabilize PSII assembly intermediates. The protein is High light-inducible protein HliD (hliD) of Synechocystis sp. (strain ATCC 27184 / PCC 6803 / Kazusa).